A 657-amino-acid polypeptide reads, in one-letter code: MTQLAIGKPTPLGAHYDGQGVNFTLFSAHAERVELCVFDANGQEHRYDLPGHSGDIWHGYLPDARPGLRYGYRVHGPWQPAEGHRFNPAKLLIDPCARQIDGEFKDNPLLHAGHNEPDYRDNAAIAPKCVVVVDHYDWEDDAPPRTPWGSTIIYEAHVKGLTYLHPEIPVEIRGTYKALGHPVMINYLKQLGITALELLPVAQFASEPRLQRMGLSNYWGYNPVAMFALHPAYACSPETALDEFRDAIKALHKAGIEVILDIVLNHSAELDLDGPLFSLRGIDNRSYYWIREDGDYHNWTGCGNTLNLSHPAVVDYASACLRYWVETCHVDGFRFDLAAVMGRTPEFRQDAPLFTAIQNCPVLSQVKLIAEPWDIAPGGYQVGNFPPLFAEWNDHFRDAARRFWLHYDLPLGAFAGRFAASSDVFKRNDRLPSAAINLVTAHDGFTLRDCVCFNHKHNEANGEENRDGTNNNYSNNHGKEGLGGTLDLVERRRDSIHALLTTLLLSQGTPMLLAGDEHGHSQHGNNNAYCQDNQLTWLDWSQASSGLTAFTAALIHLRKRIPALVENRWWEEGDGNVRWLNRYAQPLSTDEWQNGPKQLQILLSDRFLIAINATLEVTEIVLPAGEWHAIPPFAGEDNPVITAVWQGPAHGLCVFQR.

The Nucleophile role is filled by Asp-336. The active-site Proton donor is the Glu-371. The disordered stretch occupies residues 460–479 (ANGEENRDGTNNNYSNNHGK).

Belongs to the glycosyl hydrolase 13 family.

It catalyses the reaction Hydrolysis of (1-&gt;6)-alpha-D-glucosidic linkages to branches with degrees of polymerization of three or four glucose residues in limit dextrin.. The protein operates within glycan degradation; glycogen degradation. Functionally, removes maltotriose and maltotetraose chains that are attached by 1,6-alpha-linkage to the limit dextrin main chain, generating a debranched limit dextrin. This chain is Glycogen debranching enzyme, found in Escherichia coli (strain SMS-3-5 / SECEC).